A 989-amino-acid polypeptide reads, in one-letter code: Cellulose synthase A catalytic subunit 4 [UDP-forming] (989 aa).

The Cytoplasmic portion of the chain corresponds to 1–184 (MMESGVPPCA…SRIIPISKNK (184 aa)). 8 residues coordinate Zn(2+): Cys9, Cys12, Cys20, Cys23, Cys28, Cys31, Cys43, and Cys46. The RING-type; degenerate zinc finger occupies 9 to 47 (CAACGDDAHAACRACSYALCKACLDEDAAEGRTTCARCG). The span at 138–149 (KKEKKASAKKAA) shows a compositional bias: basic residues. The tract at residues 138–158 (KKEKKASAKKAAAKAQAPPVE) is disordered. The helical transmembrane segment at 185 to 205 (LTPYRAVIIMRLVVLGLFFHY) threads the bilayer. At 206 to 213 (RITNPVYS) the chain is on the extracellular side. A helical transmembrane segment spans residues 214 to 234 (AFGLWMTSVICEIWFGFSWIL). The Cytoplasmic portion of the chain corresponds to 235 to 772 (DQFPKWCPIN…INTIVYPFTS (538 aa)). UDP-alpha-D-glucose is bound by residues Ser272, Lys278, Glu279, and Asp308. The active site involves Asp308. A coiled-coil region spans residues 362–389 (VKERRAMKRDYEEYKVRINALVAKAQKT). Residue Lys449 participates in UDP-alpha-D-glucose binding. Mn(2+)-binding residues include Lys450 and Asp474. Asp688 is a catalytic residue. A helical transmembrane segment spans residues 773 to 793 (LPLIAYCCLPAICLLTGKFII). Topologically, residues 794–798 (PTLSN) are extracellular. A helical transmembrane segment spans residues 799 to 819 (AATIWFLGLFISIIVTSVLEL). Residues 820–835 (RWSGIGIEDWWRNEQF) are Cytoplasmic-facing. Residues 836–856 (WVIGGVSAHLFAVFQGILKMI) traverse the membrane as a helical segment. The Extracellular portion of the chain corresponds to 857-884 (AGLDTNFTVTAKATDDTEFGELYVFKWT). N-linked (GlcNAc...) asparagine glycosylation occurs at Asn862. A helical transmembrane segment spans residues 885–905 (TVLIPPTSILVLNLVGVVAGF). Topologically, residues 906 to 916 (SDALNSGYESW) are cytoplasmic. The helical transmembrane segment at 917–937 (GPLFGKVFFAMWVIMHLYPFL) threads the bilayer. Over 938–946 (KGLMGRQNR) the chain is Extracellular. Residues 947–967 (TPTIVVLWSVLLASVFSLLWV) traverse the membrane as a helical segment. The Cytoplasmic segment spans residues 968–989 (KIDPFIGSSETTTTNSCANFDC).

The protein belongs to the glycosyltransferase 2 family. Plant cellulose synthase subfamily. Requires Mn(2+) as cofactor. Zn(2+) serves as cofactor.

Its subcellular location is the cell membrane. It carries out the reaction [(1-&gt;4)-beta-D-glucosyl](n) + UDP-alpha-D-glucose = [(1-&gt;4)-beta-D-glucosyl](n+1) + UDP + H(+). It participates in glycan metabolism; plant cellulose biosynthesis. In terms of biological role, catalytic subunit of cellulose synthase terminal complexes ('rosettes'), required for beta-1,4-glucan microfibril crystallization, a major mechanism of the cell wall formation. Involved in the secondary cell wall formation. The sequence is that of Cellulose synthase A catalytic subunit 4 [UDP-forming] (CESA4) from Oryza sativa subsp. indica (Rice).